The chain runs to 443 residues: Carbohydrate sulfotransferase 9 (443 aa).

At 1-12 (MQPSEMVMNPKQ) the chain is on the cytoplasmic side. A helical; Signal-anchor for type II membrane protein membrane pass occupies residues 13 to 33 (VFLSVLIFGVAGLLLFMYLQV). The Lumenal segment spans residues 34–443 (WIEEQHTGRV…LMFNYTTPFL (410 aa)). Residues 108-128 (LTKTSHSQGGDQALSKSTGSP) show a composition bias toward polar residues. The tract at residues 108-132 (LTKTSHSQGGDQALSKSTGSPTEKL) is disordered. N-linked (GlcNAc...) asparagine glycosylation occurs at asparagine 159. Residue 220 to 226 (PKAGCSN) coordinates 3'-phosphoadenylyl sulfate. N-linked (GlcNAc...) asparagine glycosylation is present at asparagine 243. Residue 280–288 (RDPMERLVS) participates in 3'-phosphoadenylyl sulfate binding. Residues asparagine 324 and asparagine 437 are each glycosylated (N-linked (GlcNAc...) asparagine).

Belongs to the sulfotransferase 2 family. As to expression, highly expressed in trachea. Also expressed in fetal lung, adult pancreas, testis and salivary gland. Expressed at low level in pituitary gland, apex of the heart, adult lung, prostate and mammary gland. Weakly or not expressed in heart, liver and spinal cord.

Its subcellular location is the golgi apparatus membrane. It is found in the secreted. Catalyzes the transfer of sulfate to position 4 of non-reducing N-acetylgalactosamine (GalNAc) residues in both N-glycans and O-glycans. Participates in biosynthesis of glycoprotein hormones lutropin and thyrotropin, by mediating sulfation of their carbohydrate structures. Has a higher activity toward carbonic anhydrase VI than toward lutropin. Only active against terminal GalNAcbeta1,GalNAcbeta. Isoform 2, but not isoform 1, is active toward chondroitin. This Homo sapiens (Human) protein is Carbohydrate sulfotransferase 9 (CHST9).